The following is a 250-amino-acid chain: Biosynthetic peptidoglycan transglycosylase (250 aa).

A helical membrane pass occupies residues 15–35 (AVLLFFVSSLGFVLLYRFVPV).

It belongs to the glycosyltransferase 51 family.

It localises to the cell inner membrane. It catalyses the reaction [GlcNAc-(1-&gt;4)-Mur2Ac(oyl-L-Ala-gamma-D-Glu-L-Lys-D-Ala-D-Ala)](n)-di-trans,octa-cis-undecaprenyl diphosphate + beta-D-GlcNAc-(1-&gt;4)-Mur2Ac(oyl-L-Ala-gamma-D-Glu-L-Lys-D-Ala-D-Ala)-di-trans,octa-cis-undecaprenyl diphosphate = [GlcNAc-(1-&gt;4)-Mur2Ac(oyl-L-Ala-gamma-D-Glu-L-Lys-D-Ala-D-Ala)](n+1)-di-trans,octa-cis-undecaprenyl diphosphate + di-trans,octa-cis-undecaprenyl diphosphate + H(+). It participates in cell wall biogenesis; peptidoglycan biosynthesis. Functionally, peptidoglycan polymerase that catalyzes glycan chain elongation from lipid-linked precursors. In Bdellovibrio bacteriovorus (strain ATCC 15356 / DSM 50701 / NCIMB 9529 / HD100), this protein is Biosynthetic peptidoglycan transglycosylase.